Here is a 158-residue protein sequence, read N- to C-terminus: NAD(P)H-quinone oxidoreductase subunit N (158 aa).

It belongs to the complex I NdhN subunit family. As to quaternary structure, NDH-1 can be composed of about 15 different subunits; different subcomplexes with different compositions have been identified which probably have different functions.

It localises to the cellular thylakoid membrane. The catalysed reaction is a plastoquinone + NADH + (n+1) H(+)(in) = a plastoquinol + NAD(+) + n H(+)(out). It catalyses the reaction a plastoquinone + NADPH + (n+1) H(+)(in) = a plastoquinol + NADP(+) + n H(+)(out). Functionally, NDH-1 shuttles electrons from an unknown electron donor, via FMN and iron-sulfur (Fe-S) centers, to quinones in the respiratory and/or the photosynthetic chain. The immediate electron acceptor for the enzyme in this species is believed to be plastoquinone. Couples the redox reaction to proton translocation, and thus conserves the redox energy in a proton gradient. Cyanobacterial NDH-1 also plays a role in inorganic carbon-concentration. This Prochlorococcus marinus (strain MIT 9301) protein is NAD(P)H-quinone oxidoreductase subunit N.